The primary structure comprises 187 residues: Photosystem I assembly protein Ycf4 (187 aa).

The next 2 membrane-spanning stretches (helical) occupy residues 21–43 and 69–91; these read LSNY…AGIS and LLYG…WNVG.

The protein belongs to the Ycf4 family.

The protein localises to the plastid. The protein resides in the cyanelle thylakoid membrane. Seems to be required for the assembly of the photosystem I complex. This chain is Photosystem I assembly protein Ycf4, found in Cyanophora paradoxa.